Here is an 822-residue protein sequence, read N- to C-terminus: Calpain-3 (822 aa).

The segment at M1–G36 is disordered. In terms of domain architecture, Calpain catalytic spans L74 to T418. Active-site residues include C129, H335, and N359. The segment at A419 to N587 is domain III. The linker stretch occupies residues T588–S649. The segment at P600–E651 is disordered. Basic and acidic residues predominate over residues E623–A635. EF-hand domains are found at residues K650–K684, F693–K726, K723–H758, and V788–A822. Residues K650–A822 form a domain IV region. Ca(2+)-binding residues include A663, D666, E668, E673, D706, D708, S710, R712, E717, D736, D738, S740, T742, E747, D801, D803, D805, and I807.

The protein belongs to the peptidase C2 family. Homodimer; via EF-hand domain 4. Interacts with TTN/titin. Interacts with CMYA5; this interaction, which results in CMYA5 proteolysis, may protect CAPN3 from autolysis. Interacts with SIMC1. Interacts with UTP25; the interaction is required for CAPN3 translocation to the nucleolus. In terms of tissue distribution, skeletal muscle.

Its subcellular location is the cytoplasm. The protein localises to the nucleus. The protein resides in the nucleolus. The catalysed reaction is Broad endopeptidase activity.. With respect to regulation, activated by micromolar concentrations of calcium and inhibited by calpastatin. Calcium-regulated non-lysosomal thiol-protease. Proteolytically cleaves CTBP1. Mediates, with UTP25, the proteasome-independent degradation of p53/TP53. The polypeptide is Calpain-3 (CAPN3) (Ovis aries (Sheep)).